We begin with the raw amino-acid sequence, 134 residues long: MGKDTIADIITCIRNADMNRKGTVRIVSTNITENIVKILLREGFIENARKHQERNKYFLVLTLRHRRNKKGPYLNTFHLKRVSRPGLRIYSNYQRIPRILGGMGIAILSTSRGIMTDREARLEGIGGEILCYIW.

In terms of assembly, component of the chloroplast small ribosomal subunit (SSU). Mature 70S chloroplast ribosomes of higher plants consist of a small (30S) and a large (50S) subunit. The 30S small subunit contains 1 molecule of ribosomal RNA (16S rRNA) and 24 different proteins. The 50S large subunit contains 3 rRNA molecules (23S, 5S and 4.5S rRNA) and 33 different proteins.

The protein localises to the plastid. It is found in the chloroplast. Its function is as follows. Component of the chloroplast ribosome (chloro-ribosome), a dedicated translation machinery responsible for the synthesis of chloroplast genome-encoded proteins, including proteins of the transcription and translation machinery and components of the photosynthetic apparatus. The protein is Small ribosomal subunit protein uS8c (rps8) of Spinacia oleracea (Spinach).